The following is a 184-amino-acid chain: Threonylcarbamoyl-AMP synthase (184 aa).

The 184-residue stretch at 1-184 (MNNLENIVEQ…IFTQHIFRQG (184 aa)) folds into the YrdC-like domain.

This sequence belongs to the SUA5 family. TsaC subfamily.

The protein localises to the cytoplasm. The catalysed reaction is L-threonine + hydrogencarbonate + ATP = L-threonylcarbamoyladenylate + diphosphate + H2O. In terms of biological role, required for the formation of a threonylcarbamoyl group on adenosine at position 37 (t(6)A37) in tRNAs that read codons beginning with adenine. Catalyzes the conversion of L-threonine, HCO(3)(-)/CO(2) and ATP to give threonylcarbamoyl-AMP (TC-AMP) as the acyladenylate intermediate, with the release of diphosphate. The polypeptide is Threonylcarbamoyl-AMP synthase (Actinobacillus pleuropneumoniae serotype 7 (strain AP76)).